A 98-amino-acid chain; its full sequence is ESAT-6-like protein EsxW (98 aa).

Belongs to the WXG100 family. CFP-10 subfamily. As to quaternary structure, forms a tight 1:1 complex with EsxV. The complex is destabilized at low pH. Unfolding of the proteins is required for dissociation of the complex and membrane binding.

The protein resides in the secreted. This Mycobacterium tuberculosis (strain ATCC 25618 / H37Rv) protein is ESAT-6-like protein EsxW.